We begin with the raw amino-acid sequence, 239 residues long: Probable transcriptional regulatory protein ABO_1803 (239 aa).

Belongs to the TACO1 family.

It localises to the cytoplasm. The chain is Probable transcriptional regulatory protein ABO_1803 from Alcanivorax borkumensis (strain ATCC 700651 / DSM 11573 / NCIMB 13689 / SK2).